A 645-amino-acid polypeptide reads, in one-letter code: UvrABC system protein C (645 aa).

Residues 1 to 20 form a disordered region; it reads MTDLPPHSSHHPADQGEPLV. The GIY-YIG domain maps to 40–118; that stretch reads YSPGVYRMLS…IKRMKPRFNI (79 aa). The 36-residue stretch at 228-263 folds into the UVR domain; it reads TELQQRLVAEMEQASQELNYERAASIRDRIRGFASI.

This sequence belongs to the UvrC family. In terms of assembly, interacts with UvrB in an incision complex.

It is found in the cytoplasm. In terms of biological role, the UvrABC repair system catalyzes the recognition and processing of DNA lesions. UvrC both incises the 5' and 3' sides of the lesion. The N-terminal half is responsible for the 3' incision and the C-terminal half is responsible for the 5' incision. This is UvrABC system protein C from Gluconobacter oxydans (strain 621H) (Gluconobacter suboxydans).